The sequence spans 130 residues: Large ribosomal subunit protein bL19 (130 aa).

It belongs to the bacterial ribosomal protein bL19 family.

In terms of biological role, this protein is located at the 30S-50S ribosomal subunit interface and may play a role in the structure and function of the aminoacyl-tRNA binding site. This Parvibaculum lavamentivorans (strain DS-1 / DSM 13023 / NCIMB 13966) protein is Large ribosomal subunit protein bL19.